Here is a 79-residue protein sequence, read N- to C-terminus: DNA-directed RNA polymerase subunit omega (79 aa).

The protein belongs to the RNA polymerase subunit omega family. In cyanobacteria the RNAP catalytic core is composed of 2 alpha, 1 beta, 1 beta', 1 gamma and 1 omega subunit. When a sigma factor is associated with the core the holoenzyme is formed, which can initiate transcription.

It catalyses the reaction RNA(n) + a ribonucleoside 5'-triphosphate = RNA(n+1) + diphosphate. Functionally, promotes RNA polymerase assembly. Latches the N- and C-terminal regions of the beta' subunit thereby facilitating its interaction with the beta and alpha subunits. This chain is DNA-directed RNA polymerase subunit omega, found in Synechococcus sp. (strain JA-3-3Ab) (Cyanobacteria bacterium Yellowstone A-Prime).